We begin with the raw amino-acid sequence, 193 residues long: Ribosomal RNA small subunit methyltransferase G (193 aa).

Residues Gly-61, Leu-66, Ile-112 to Glu-113, and Arg-126 each bind S-adenosyl-L-methionine.

This sequence belongs to the methyltransferase superfamily. RNA methyltransferase RsmG family.

It is found in the cytoplasm. It carries out the reaction guanosine(527) in 16S rRNA + S-adenosyl-L-methionine = N(7)-methylguanosine(527) in 16S rRNA + S-adenosyl-L-homocysteine. Specifically methylates the N7 position of guanine in position 527 of 16S rRNA. In Paracoccus denitrificans (strain Pd 1222), this protein is Ribosomal RNA small subunit methyltransferase G.